The following is a 228-amino-acid chain: Eukaryotic translation initiation factor 4E-1 (228 aa).

EIF4G-binding regions lie at residues 53 to 56 (HLLE) and 63 to 99 (FDTP…NNIH). Residues 71–76 (KQDDWG), K103, and 121–122 (WE) each bind mRNA. C126 and C164 form a disulfide bridge. The tract at residues 147–156 (YTLLAMIGEQ) is EIF4G-binding. MRNA-binding positions include 171–176 (RGRAEK) and 216–220 (RKLDR).

It belongs to the eukaryotic initiation factor 4E family. In terms of assembly, EIF4F is a multi-subunit complex, the composition of which varies with external and internal environmental conditions. It is composed of at least EIF4A, EIF4E and EIF4G. EIF4E is also known to interact with other partners. In higher plants two isoforms of EIF4F have been identified, named isoform EIF4F and isoform EIF(iso)4F. Isoform EIF4F has subunits p220 and p26, whereas isoform EIF(iso)4F has subunits p82 and p28. As to quaternary structure, (Microbial infection) Interacts with potyvirus viral genome-linked protein (VPg); this interaction is possible in susceptible hosts but impaired in resistant plants. According to the redox status, the Cys-126-Cys-164 disulfide bridge may have a role in regulating protein function by affecting its ability to bind capped mRNA.

Its subcellular location is the nucleus. It is found in the cytoplasm. Its function is as follows. Component of the protein complex eIF4F, which is involved in the recognition of the mRNA cap, ATP-dependent unwinding of 5'-terminal secondary structure and recruitment of mRNA to the ribosome. Recognizes and binds the 7-methylguanosine-containing mRNA cap during an early step in the initiation of protein synthesis and facilitates ribosome binding by inducing the unwinding of the mRNAs secondary structures. Key component of recessive resistance to potyviruses. (Microbial infection) Susceptibility host factor required for viral infection by recruiting viral RNAs to the host ribosomal complex via an interaction with viral genome-linked protein (VPg). Also seems to be involved in virus movement from cell-to-cell. The chain is Eukaryotic translation initiation factor 4E-1 from Pisum sativum (Garden pea).